We begin with the raw amino-acid sequence, 137 residues long: ATP synthase epsilon chain (137 aa).

Belongs to the ATPase epsilon chain family. In terms of assembly, F-type ATPases have 2 components, CF(1) - the catalytic core - and CF(0) - the membrane proton channel. CF(1) has five subunits: alpha(3), beta(3), gamma(1), delta(1), epsilon(1). CF(0) has three main subunits: a, b and c.

The protein resides in the cellular thylakoid membrane. Its function is as follows. Produces ATP from ADP in the presence of a proton gradient across the membrane. The polypeptide is ATP synthase epsilon chain (Synechococcus sp. (strain JA-2-3B'a(2-13)) (Cyanobacteria bacterium Yellowstone B-Prime)).